A 56-amino-acid chain; its full sequence is Frontoxin I (56 aa).

4 disulfide bridges follow: C3-C22, C17-C39, C41-C52, and C53-C56.

This sequence belongs to the three-finger toxin family. Short-chain subfamily. Type I alpha-neurotoxin sub-subfamily. As to expression, expressed by the venom gland.

The protein localises to the secreted. Its function is as follows. Binds to muscle nicotinic acetylcholine receptor (nAChR) and inhibit acetylcholine from binding to the receptor, thereby impairing neuromuscular transmission. The protein is Frontoxin I of Micrurus frontalis (Coral snake).